A 129-amino-acid chain; its full sequence is Small ribosomal subunit protein uS11 (129 aa).

This sequence belongs to the universal ribosomal protein uS11 family. In terms of assembly, part of the 30S ribosomal subunit. Interacts with proteins S7 and S18. Binds to IF-3.

Located on the platform of the 30S subunit, it bridges several disparate RNA helices of the 16S rRNA. Forms part of the Shine-Dalgarno cleft in the 70S ribosome. The polypeptide is Small ribosomal subunit protein uS11 (Dechloromonas aromatica (strain RCB)).